An 822-amino-acid polypeptide reads, in one-letter code: Valine--tRNA ligase (822 aa).

The 'HIGH' region signature appears at Pro41–His51. A 'KMSKS' region motif is present at residues Lys511 to Ser515. Residue Lys514 participates in ATP binding. Residues Glu765–Lys822 adopt a coiled-coil conformation.

This sequence belongs to the class-I aminoacyl-tRNA synthetase family. ValS type 1 subfamily. As to quaternary structure, monomer.

The protein localises to the cytoplasm. The enzyme catalyses tRNA(Val) + L-valine + ATP = L-valyl-tRNA(Val) + AMP + diphosphate. Its function is as follows. Catalyzes the attachment of valine to tRNA(Val). As ValRS can inadvertently accommodate and process structurally similar amino acids such as threonine, to avoid such errors, it has a 'posttransfer' editing activity that hydrolyzes mischarged Thr-tRNA(Val) in a tRNA-dependent manner. The chain is Valine--tRNA ligase from Mesomycoplasma hyopneumoniae (strain 7448) (Mycoplasma hyopneumoniae).